Here is a 253-residue protein sequence, read N- to C-terminus: 5'-nucleotidase SurE (253 aa).

A divalent metal cation contacts are provided by Asp-8, Asp-9, Ser-39, and Asn-95.

Belongs to the SurE nucleotidase family. A divalent metal cation serves as cofactor.

It localises to the cytoplasm. It carries out the reaction a ribonucleoside 5'-phosphate + H2O = a ribonucleoside + phosphate. Its function is as follows. Nucleotidase that shows phosphatase activity on nucleoside 5'-monophosphates. The sequence is that of 5'-nucleotidase SurE from Desulfatibacillum aliphaticivorans.